Here is a 483-residue protein sequence, read N- to C-terminus: tRNA sulfurtransferase (483 aa).

One can recognise a THUMP domain in the interval 61 to 165 (PLVADALTLI…NDRLLLITER (105 aa)). ATP is bound by residues 183–184 (LI), Lys265, Gly287, and Gln296. The cysteines at positions 344 and 457 are disulfide-linked. The Rhodanese domain occupies 405–483 (LGSGDVVLDI…GFQNVKVYRP (79 aa)). Cys457 functions as the Cysteine persulfide intermediate in the catalytic mechanism.

Belongs to the ThiI family.

It localises to the cytoplasm. The catalysed reaction is [ThiI sulfur-carrier protein]-S-sulfanyl-L-cysteine + a uridine in tRNA + 2 reduced [2Fe-2S]-[ferredoxin] + ATP + H(+) = [ThiI sulfur-carrier protein]-L-cysteine + a 4-thiouridine in tRNA + 2 oxidized [2Fe-2S]-[ferredoxin] + AMP + diphosphate. The enzyme catalyses [ThiS sulfur-carrier protein]-C-terminal Gly-Gly-AMP + S-sulfanyl-L-cysteinyl-[cysteine desulfurase] + AH2 = [ThiS sulfur-carrier protein]-C-terminal-Gly-aminoethanethioate + L-cysteinyl-[cysteine desulfurase] + A + AMP + 2 H(+). The protein operates within cofactor biosynthesis; thiamine diphosphate biosynthesis. In terms of biological role, catalyzes the ATP-dependent transfer of a sulfur to tRNA to produce 4-thiouridine in position 8 of tRNAs, which functions as a near-UV photosensor. Also catalyzes the transfer of sulfur to the sulfur carrier protein ThiS, forming ThiS-thiocarboxylate. This is a step in the synthesis of thiazole, in the thiamine biosynthesis pathway. The sulfur is donated as persulfide by IscS. The sequence is that of tRNA sulfurtransferase from Sodalis glossinidius (strain morsitans).